Reading from the N-terminus, the 260-residue chain is Voltage-dependent calcium channel gamma-6 subunit (260 aa).

The next 4 membrane-spanning stretches (helical) occupy residues 43-63 (LLVAIVGATLAVLAVGTEFWV), 143-163 (VIAVLGLTAMALGCLCVIMVL), 169-189 (SLLRLGAVCFGLSGLLLFVSL), and 221-241 (LGCGVGAGLILLLGGVCFLLL).

It belongs to the PMP-22/EMP/MP20 family. CACNG subfamily. As to quaternary structure, interacts with CACNA1C. Identified in a complex with the L-type calcium channel subunits CACNA1C, CACNA2D1 and either CACNB1 or CACNB2. In terms of tissue distribution, detected in brain and heart (at protein level).

It is found in the cell membrane. Regulates the activity of L-type calcium channels that contain CACNA1C as pore-forming subunit. This chain is Voltage-dependent calcium channel gamma-6 subunit (Cacng6), found in Mus musculus (Mouse).